Consider the following 377-residue polypeptide: Protein RecA (377 aa).

ATP is bound at residue 66–73; sequence GPESSGKT. The tract at residues 329-377 is disordered; it reads VGVRPEEPTAEPGADAAVTSAAAATDDTAKTVSAPAAKTTKSKAAAAKS. The span at 342–377 shows a compositional bias: low complexity; it reads ADAAVTSAAAATDDTAKTVSAPAAKTTKSKAAAAKS.

This sequence belongs to the RecA family.

The protein resides in the cytoplasm. In terms of biological role, can catalyze the hydrolysis of ATP in the presence of single-stranded DNA, the ATP-dependent uptake of single-stranded DNA by duplex DNA, and the ATP-dependent hybridization of homologous single-stranded DNAs. It interacts with LexA causing its activation and leading to its autocatalytic cleavage. In Streptomyces avermitilis (strain ATCC 31267 / DSM 46492 / JCM 5070 / NBRC 14893 / NCIMB 12804 / NRRL 8165 / MA-4680), this protein is Protein RecA.